We begin with the raw amino-acid sequence, 188 residues long: uncharacterized protein (188 aa).

A helical membrane pass occupies residues 121–139 (IWLYGGASLITTFINLGLV).

This sequence to B.subtilis YwjB.

It localises to the membrane. This is an uncharacterized protein from Bacillus subtilis (strain 168).